A 394-amino-acid chain; its full sequence is Elongation factor Tu (394 aa).

Residues 10 to 204 form the tr-type G domain; sequence KPHVNVGTIG…ALDSYIPEPE (195 aa). The interval 19–26 is G1; it reads GHVDHGKT. GTP is bound at residue 19–26; it reads GHVDHGKT. T26 serves as a coordination point for Mg(2+). The tract at residues 60-64 is G2; the sequence is GITIS. The interval 81–84 is G3; the sequence is DCPG. GTP is bound by residues 81 to 85 and 136 to 139; these read DCPGH and NKCD. The G4 stretch occupies residues 136-139; it reads NKCD. The interval 174–176 is G5; that stretch reads SAL.

Belongs to the TRAFAC class translation factor GTPase superfamily. Classic translation factor GTPase family. EF-Tu/EF-1A subfamily. As to quaternary structure, monomer.

It localises to the cytoplasm. The enzyme catalyses GTP + H2O = GDP + phosphate + H(+). Functionally, GTP hydrolase that promotes the GTP-dependent binding of aminoacyl-tRNA to the A-site of ribosomes during protein biosynthesis. The chain is Elongation factor Tu from Alteromonas mediterranea (strain DSM 17117 / CIP 110805 / LMG 28347 / Deep ecotype).